The chain runs to 389 residues: Chalcone synthase 6 (389 aa).

Cys-164 is a catalytic residue.

The protein belongs to the thiolase-like superfamily. Chalcone/stilbene synthases family.

The catalysed reaction is (E)-4-coumaroyl-CoA + 3 malonyl-CoA + 3 H(+) = 2',4,4',6'-tetrahydroxychalcone + 3 CO2 + 4 CoA. It functions in the pathway secondary metabolite biosynthesis; flavonoid biosynthesis. In terms of biological role, the primary product of this enzyme is 4,2',4',6'-tetrahydroxychalcone (also termed naringenin-chalcone or chalcone) which can under specific conditions spontaneously isomerize into naringenin. This chain is Chalcone synthase 6 (CHS6), found in Trifolium subterraneum (Subterranean clover).